The primary structure comprises 102 residues: Signal recognition particle 19 kDa protein (102 aa).

This sequence belongs to the SRP19 family. In terms of assembly, part of the signal recognition particle protein translocation system, which is composed of SRP and FtsY. Archaeal SRP consists of a 7S RNA molecule of 300 nucleotides and two protein subunits: SRP54 and SRP19.

Its subcellular location is the cytoplasm. Functionally, involved in targeting and insertion of nascent membrane proteins into the cytoplasmic membrane. Binds directly to 7S RNA and mediates binding of the 54 kDa subunit of the SRP. In Saccharolobus solfataricus (strain ATCC 35092 / DSM 1617 / JCM 11322 / P2) (Sulfolobus solfataricus), this protein is Signal recognition particle 19 kDa protein.